The chain runs to 464 residues: ATP synthase subunit beta (464 aa).

151-158 (GGAGVGKT) contacts ATP.

Belongs to the ATPase alpha/beta chains family. F-type ATPases have 2 components, CF(1) - the catalytic core - and CF(0) - the membrane proton channel. CF(1) has five subunits: alpha(3), beta(3), gamma(1), delta(1), epsilon(1). CF(0) has three main subunits: a(1), b(2) and c(9-12). The alpha and beta chains form an alternating ring which encloses part of the gamma chain. CF(1) is attached to CF(0) by a central stalk formed by the gamma and epsilon chains, while a peripheral stalk is formed by the delta and b chains.

Its subcellular location is the cell membrane. The catalysed reaction is ATP + H2O + 4 H(+)(in) = ADP + phosphate + 5 H(+)(out). Functionally, produces ATP from ADP in the presence of a proton gradient across the membrane. The catalytic sites are hosted primarily by the beta subunits. The polypeptide is ATP synthase subunit beta (Clostridium kluyveri (strain ATCC 8527 / DSM 555 / NBRC 12016 / NCIMB 10680 / K1)).